Reading from the N-terminus, the 291-residue chain is Early E4 34 kDa protein (291 aa).

The protein belongs to the adenoviridae E4 30 to 34 kDa protein family. As to quaternary structure, interacts with E1B-55k.

The protein localises to the host nucleus. Its subcellular location is the host cytoplasm. In terms of biological role, plays a major role to prevent cellular inhibition of viral genome replication by nuclear bodies. Assembles an SCF-like E3 ubiquitin ligase complex based on the cellular proteins ELOB, ELOC, CUL5 and RBX1, in cooperation with viral E1B-55K. This viral RING-type ligase ubiquitinates cellular substrates prior to proteasomal degradation: p53/TP53, LIG4, MRE11-RAD50-NBS1 (MRN) complex, ITGA3, DAXX and BLM. In Homo sapiens (Human), this protein is Early E4 34 kDa protein.